The following is a 113-amino-acid chain: Large ribosomal subunit protein uL22 (113 aa).

It belongs to the universal ribosomal protein uL22 family. As to quaternary structure, part of the 50S ribosomal subunit.

Its function is as follows. This protein binds specifically to 23S rRNA; its binding is stimulated by other ribosomal proteins, e.g. L4, L17, and L20. It is important during the early stages of 50S assembly. It makes multiple contacts with different domains of the 23S rRNA in the assembled 50S subunit and ribosome. In terms of biological role, the globular domain of the protein is located near the polypeptide exit tunnel on the outside of the subunit, while an extended beta-hairpin is found that lines the wall of the exit tunnel in the center of the 70S ribosome. This chain is Large ribosomal subunit protein uL22, found in Mycoplasmopsis synoviae (strain 53) (Mycoplasma synoviae).